A 497-amino-acid chain; its full sequence is Serine/threonine protein phosphatase 2A 57 kDa regulatory subunit B' epsilon isoform (497 aa).

The tract at residues 12–71 (KFNKSDQHHQDNNNNNNNTSTNTVVRGSRTTTPAPSSVSNGESQTTAQSPSQTPNHPMFT) is disordered. Low complexity predominate over residues 23–34 (NNNNNNNTSTNT). Residues 35 to 71 (VVRGSRTTTPAPSSVSNGESQTTAQSPSQTPNHPMFT) are compositionally biased toward polar residues.

The protein belongs to the phosphatase 2A regulatory subunit B56 family. In terms of assembly, PP2A consists of a common heteromeric enzyme, composed of a catalytic subunit (subunits C), a constant regulatory subunit (subunit A), and a variety of regulatory subunits such as subunits B (the R2/B/PR55/B55, R3/B''/PR72/PR130/PR59 and R5/B'/B56 families). As to expression, expressed ubiquitously.

The protein localises to the cytoplasm. In terms of biological role, the B regulatory subunit may modulate substrate selectivity and catalytic activity, and may also direct the localization of the catalytic enzyme to a particular subcellular compartment. The polypeptide is Serine/threonine protein phosphatase 2A 57 kDa regulatory subunit B' epsilon isoform (B'EPSILON) (Arabidopsis thaliana (Mouse-ear cress)).